The sequence spans 316 residues: Olfactory receptor 2H1 (316 aa).

Over 1-23 (MVNQSSPMGFLLLGFSEHPALER) the chain is Extracellular. An N-linked (GlcNAc...) asparagine glycan is attached at N3. A helical membrane pass occupies residues 24-47 (TLFVVVFTSYLLTLVGNTLIILLS). The Cytoplasmic portion of the chain corresponds to 48–55 (VLYPRLHS). The helical transmembrane segment at 56–77 (PMYFFLSDLSFLDLCFTTSCVP) threads the bilayer. The Extracellular segment spans residues 78-98 (QMLVNLWGPKKTISFLGCSVQ). An intrachain disulfide couples C95 to C187. A helical membrane pass occupies residues 99–118 (LFIFLSLGTTECILLTVMAF). The Cytoplasmic segment spans residues 119-137 (DRYVAVCQPLHYATIIHPR). The helical transmembrane segment at 138–156 (LCWQLASVAWVMSLVQSIV) threads the bilayer. The Extracellular segment spans residues 157–193 (QTPSTLHLPFCPHQQIDDFLCEVPSLIRLSCGDTSYN). The chain crosses the membrane as a helical span at residues 194–217 (EIQLAVSSVIFVVVPLSLILASYG). The Cytoplasmic portion of the chain corresponds to 218 to 234 (ATAQAVLRINSATAWRK). A helical membrane pass occupies residues 235–257 (AFGTCSSHLTVVTLFYSSVIAVY). At 258–270 (LQPKNPYAQGRGK) the chain is on the extracellular side. A helical transmembrane segment spans residues 271 to 290 (FFGLFYAVGTPSLNPLVYTL). The Cytoplasmic segment spans residues 291–316 (RNKEIKRALRRLLGKERDSRESWRAA).

The protein belongs to the G-protein coupled receptor 1 family.

Its subcellular location is the cell membrane. Odorant receptor. In Homo sapiens (Human), this protein is Olfactory receptor 2H1 (OR2H1).